A 79-amino-acid chain; its full sequence is Conotoxin VnMKLT1-01121 (79 aa).

A signal peptide spans 1 to 22 (MKLTCMMIVAVLFLTAWTFVTA). A propeptide spanning residues 23-48 (DDSRNGLEYLFPKAHYEMNPEASKLN) is cleaved from the precursor. 3 cysteine pairs are disulfide-bonded: cysteine 53/cysteine 70, cysteine 60/cysteine 74, and cysteine 69/cysteine 78.

This sequence belongs to the conotoxin O1 superfamily. In terms of tissue distribution, expressed by the venom duct.

It localises to the secreted. The sequence is that of Conotoxin VnMKLT1-01121 from Conus ventricosus (Mediterranean cone).